The primary structure comprises 578 residues: MVSHKCVEEFGYASYLVPSNARAPRSARKRRSIEKRISKEDDNMCAIDLLATVAGHLSFESGSSLMSIDKLIEDHRVKEEFPEEEKPLMPVALSPYRGSLSPCGFSSVINGKVENEVDGFSYSGGSDACQVGNFSQDVKPDIDGDAVVLDARPNVVVSLGSSSRTEVPSIGNCVSHGVRDDVNLFSRDDDENFSKYIHPRVTKHSPRTVPRIGDRRIRKILASRHWKGGSRHSDTKPWRNYYLHQQRSYPIKKRKNFDHISDSVTDDYRMRTKMHRGSRKGQGASFVASDSHVKLRIKSFRVPELFIEIPETATVGSLKRMVMEAVSTLLSDGHRVGLMVQGKKVRDDNKTLHQTGISQDNSHLDSLDFSLEPSSEMPQLLTSHPLGHACEELLPVCQATKIDNVLESDHHDSALFPSDSLGNNNVTEDSKAMISVALNELSSQSQPPSRKSRRSEQQQQQAAQRRIRRPFSVAEVEALVQAVEKLGTGRWRDVKLCAFEDADHRTYVDLKDKWKTLVHTAKISPQQRRGEPVPQELLNRVLNAHGYWTQQQMQQLQQNVNKLEQETQSQTTEGLLLL.

In terms of domain architecture, Ubiquitin-like spans 293–372; it reads VKLRIKSFRV…HLDSLDFSLE (80 aa). Positions 440–467 are disordered; that stretch reads ELSSQSQPPSRKSRRSEQQQQQAAQRRI. The HTH myb-type domain occupies 463–522; the sequence is AQRRIRRPFSVAEVEALVQAVEKLGTGRWRDVKLCAFEDADHRTYVDLKDKWKTLVHTAK. 3 interaction with DNA regions span residues 465–469, 511–515, and 522–529; these read RRIRR, KDKWK, and KISPQQRR. Residues 491-518 constitute a DNA-binding region (H-T-H motif); that stretch reads WRDVKLCAFEDADHRTYVDLKDKWKTLV.

In terms of assembly, homodimer and heterodimer with TRP2 and TRP3. Interacts with KU70. In terms of tissue distribution, expressed ubiquitously. Highest expression in flowers and leaves.

The protein resides in the nucleus. Functionally, binds specifically to the plant telomeric double-stranded DNA sequences 5'-GGTTTAG-3'. At least 4 repeats of telomeric sequences are required for binding. Induces DNA bending. This chain is Telomere repeat-binding protein 1 (TRP1), found in Arabidopsis thaliana (Mouse-ear cress).